The chain runs to 371 residues: Glutamate 5-kinase (371 aa).

Position 14 (Lys14) interacts with ATP. The substrate site is built by Ser54, Asp141, and Asn153. 173–174 (TD) contacts ATP. Residues 280–357 (AGDLILDDGA…TQIEKLLGYI (78 aa)) enclose the PUA domain.

Belongs to the glutamate 5-kinase family.

The protein localises to the cytoplasm. The enzyme catalyses L-glutamate + ATP = L-glutamyl 5-phosphate + ADP. Its pathway is amino-acid biosynthesis; L-proline biosynthesis; L-glutamate 5-semialdehyde from L-glutamate: step 1/2. Its function is as follows. Catalyzes the transfer of a phosphate group to glutamate to form L-glutamate 5-phosphate. In Aromatoleum aromaticum (strain DSM 19018 / LMG 30748 / EbN1) (Azoarcus sp. (strain EbN1)), this protein is Glutamate 5-kinase.